The sequence spans 300 residues: Mycothiol acetyltransferase (300 aa).

2 N-acetyltransferase domains span residues 4–140 (IDWR…RPLT) and 151–300 (VRLA…AVAD). Residue Asp-36 coordinates 1D-myo-inositol 2-(L-cysteinylamino)-2-deoxy-alpha-D-glucopyranoside. Position 79 to 81 (79 to 81 (LVV)) interacts with acetyl-CoA. Residues Glu-178, Lys-219, and Glu-227 each coordinate 1D-myo-inositol 2-(L-cysteinylamino)-2-deoxy-alpha-D-glucopyranoside. 231-233 (VGV) is an acetyl-CoA binding site. 1D-myo-inositol 2-(L-cysteinylamino)-2-deoxy-alpha-D-glucopyranoside is bound at residue Tyr-269. 274 to 279 (NGAAVK) lines the acetyl-CoA pocket.

Belongs to the acetyltransferase family. MshD subfamily. Monomer.

The catalysed reaction is 1D-myo-inositol 2-(L-cysteinylamino)-2-deoxy-alpha-D-glucopyranoside + acetyl-CoA = mycothiol + CoA + H(+). Its function is as follows. Catalyzes the transfer of acetyl from acetyl-CoA to desacetylmycothiol (Cys-GlcN-Ins) to form mycothiol. This is Mycothiol acetyltransferase from Mycobacterium sp. (strain MCS).